An 891-amino-acid chain; its full sequence is DNA mismatch repair protein MutS (891 aa).

646–653 (GPNMAGKS) serves as a coordination point for ATP.

This sequence belongs to the DNA mismatch repair MutS family.

In terms of biological role, this protein is involved in the repair of mismatches in DNA. It is possible that it carries out the mismatch recognition step. This protein has a weak ATPase activity. The chain is DNA mismatch repair protein MutS from Rickettsia massiliae (strain Mtu5).